A 135-amino-acid chain; its full sequence is Large ribosomal subunit protein eL32 (135 aa).

This sequence belongs to the eukaryotic ribosomal protein eL32 family.

The polypeptide is Large ribosomal subunit protein eL32 (rpl32e) (Methanococcus maripaludis (strain DSM 14266 / JCM 13030 / NBRC 101832 / S2 / LL)).